The sequence spans 141 residues: Chorion protein S16 (141 aa).

A signal peptide spans 1–22 (MSANNMRLLCLLLACYISAIVA).

Belongs to the chorion protein S16 family.

It is found in the secreted. Functionally, chorion membrane (egg shell) protein; plays a role in protecting the egg from the environment. The polypeptide is Chorion protein S16 (Cp16) (Drosophila subobscura (Fruit fly)).